The chain runs to 845 residues: Tyrosine-protein phosphatase corkscrew (845 aa).

SH2 domains follow at residues 6-101 and 111-205; these read WFHP…KQPL and WFHG…RQPF. Residues 227–645 form the Tyrosine-protein phosphatase domain; it reads FWEEFESLQQ…KFVYYAVQHY (419 aa). The tract at residues 289–444 is PTPase insert (Cys/Ser-rich); sequence IRLPTDGDLY…REREREMFKT (156 aa). The segment at 362-402 is disordered; that stretch reads SKHKRSESSASSSPSSGSGSGPGSSGTSGVSSVNGPGTPTN. 2 stretches are compositionally biased toward low complexity: residues 369-378 and 388-400; these read SSASSSPSSG and TSGV…PGTP. The residue at position 419 (Ser419) is a Phosphoserine. Substrate contacts are provided by residues Asp545, 583-589, and Gln630; that span reads CSAGIGR. Cys583 acts as the Phosphocysteine intermediate in catalysis. The segment at 793–824 is disordered; the sequence is DSLKQQQQREEQAPAGAGKMQQPAPPLRPRPG.

The protein belongs to the protein-tyrosine phosphatase family. Non-receptor class subfamily. As to quaternary structure, interacts with drpr isoform A. As to expression, expressed uniformly throughout all tissues during embryogenesis.

The protein localises to the cytoplasm. The enzyme catalyses O-phospho-L-tyrosyl-[protein] + H2O = L-tyrosyl-[protein] + phosphate. Functionally, required in all receptor tyrosine kinase signaling pathways. Functions downstream of the receptor tyrosine kinase torso, acting in concert with D-Raf via tailless. Also functions downstream of Egfr (epidermal growth factor receptor) and btl (fibroblast growth factor receptor). The SH2 domain suggests that csw effects its role by mediating heteromeric protein interactions. Maternally required for normal determination of cell fates at the termini of the embryo. Required for cell fate specification of the ventral ectoderm, in the developing embryonic CNS and for embryonic tracheal cell migration. Functions during imaginal development for proper formation of adult structures such as eyes, aristae, L5 wing vein and the tarsal claw. Dephosphorylates drpr isoform A which is required for the inhibition by drpr isoform A of glial cell engulfment of axonal debris produced following axonal injury. This Drosophila melanogaster (Fruit fly) protein is Tyrosine-protein phosphatase corkscrew (csw).